An 83-amino-acid polypeptide reads, in one-letter code: RNA-binding protein Hfq (83 aa).

The 61-residue stretch at 11–71 folds into the Sm domain; sequence DVFLNYIRKN…ISTIMPASPV (61 aa).

This sequence belongs to the Hfq family. In terms of assembly, homohexamer.

In terms of biological role, RNA chaperone that binds small regulatory RNA (sRNAs) and mRNAs to facilitate mRNA translational regulation in response to envelope stress, environmental stress and changes in metabolite concentrations. Also binds with high specificity to tRNAs. In Rhodospirillum rubrum (strain ATCC 11170 / ATH 1.1.1 / DSM 467 / LMG 4362 / NCIMB 8255 / S1), this protein is RNA-binding protein Hfq.